The primary structure comprises 190 residues: Adenylate kinase (190 aa).

12-17 (GSGKTT) contributes to the ATP binding site. An NMP region spans residues 34 to 63 (STGDLLREEVASGSEYGKTIDSFISKGNLV). Residues T35, R40, 61–63 (NLV), 88–91 (GYPR), and Q95 each bind AMP. Residues 130 to 136 (GRARGAD) form an LID region. Residue R131 coordinates ATP. R133 and R145 together coordinate AMP. R173 lines the ATP pocket.

The protein belongs to the adenylate kinase family. In terms of assembly, monomer.

It is found in the cytoplasm. The enzyme catalyses AMP + ATP = 2 ADP. It participates in purine metabolism; AMP biosynthesis via salvage pathway; AMP from ADP: step 1/1. Its function is as follows. Catalyzes the reversible transfer of the terminal phosphate group between ATP and AMP. Plays an important role in cellular energy homeostasis and in adenine nucleotide metabolism. In Helicobacter hepaticus (strain ATCC 51449 / 3B1), this protein is Adenylate kinase.